We begin with the raw amino-acid sequence, 451 residues long: E3 ubiquitin-protein ligase trul-1 (451 aa).

The RING-type; atypical zinc-finger motif lies at 13–54 (CSICFEDLKQNDKISAIVCGHIYHHGCISQWIATKRQCPSCR). Coiled-coil stretches lie at residues 96–130 (LKVE…EKDK) and 209–243 (NKDL…DAAI). Disordered stretches follow at residues 270-297 (RDVL…MIDP) and 389-442 (KIPN…SSTS). Positions 427 to 442 (STRISSFFSRTTSSTS) are enriched in low complexity.

This sequence belongs to the TRAIP family.

It is found in the nucleus. It localises to the chromosome. The enzyme catalyses S-ubiquitinyl-[E2 ubiquitin-conjugating enzyme]-L-cysteine + [acceptor protein]-L-lysine = [E2 ubiquitin-conjugating enzyme]-L-cysteine + N(6)-ubiquitinyl-[acceptor protein]-L-lysine.. It participates in protein modification; protein ubiquitination. E3 ubiquitin ligase that acts as a key regulator of DNA repair in response to replication stress. Acts by mediating ubiquitination of the CMG helicase complex, promoting the unloading of the CMG helicase complex by the p97 ATPase (cdc-48.1 or cdc-48.2). The polypeptide is E3 ubiquitin-protein ligase trul-1 (Caenorhabditis elegans).